The sequence spans 443 residues: MSRDVRAEKLAISLLILSLFLIFQLVAEIYLNNGDQYHTETSPFTRGRSHVTRVPNHDASLSIPFLDKINQFWHVGGATQIRNIQSIKLTQDRDQDKHGLVLSNGIGDNTINDFEIVFTFRISHDPTTQLTGDGMCFAITPENGFLTQNLQSSYAKKQYMMNSQGVIADNTDLMGFPKNLPGLFIVLDTYRNQGHDHKEVPFMDVFINVAPESDWYDINSDGELSTSLRLNSRGHIKLKKNALWNRVTKLRIIYLESISFLKIDVQYAKEGNYWIELFQTTENLYLPKNMHTGQRYIGCSALNGQLTETVELLDVSTSEFHWNDMDASIEDTYDYAKEAELFLEQEFGEVLDREPDEFTKWKMIKAQPNIKTGSQSAEQKTSNNPHSRLFKVVLTIWHYSEILLLIMGIYLFSACIRVFQRRFKKIRSRRKRAGSHSVGLLPM.

The first 27 residues, 1 to 27, serve as a signal peptide directing secretion; that stretch reads MSRDVRAEKLAISLLILSLFLIFQLVA. Over 28 to 398 the chain is Perinuclear space; that stretch reads EIYLNNGDQY…LFKVVLTIWH (371 aa). A helical transmembrane segment spans residues 399-420; the sequence is YSEILLLIMGIYLFSACIRVFQ. Over 421–443 the chain is Cytoplasmic; the sequence is RRFKKIRSRRKRAGSHSVGLLPM.

It is found in the nucleus membrane. This chain is Protein UIP5 (UIP5), found in Saccharomyces cerevisiae (strain ATCC 204508 / S288c) (Baker's yeast).